A 191-amino-acid polypeptide reads, in one-letter code: Protein YceI (191 aa).

An N-terminal signal peptide occupies residues 1 to 22 (MKKNLLGFTLASLLFTTGSAVA).

Belongs to the UPF0312 family. Type 1 subfamily.

It localises to the periplasm. The protein is Protein YceI of Salmonella dublin (strain CT_02021853).